We begin with the raw amino-acid sequence, 224 residues long: 7-cyano-7-deazaguanine synthase (224 aa).

ATP is bound at residue 10–20; the sequence is FSGGQDSTTCL. Residues Cys-193, Cys-201, Cys-204, and Cys-207 each coordinate Zn(2+).

Belongs to the QueC family. Zn(2+) is required as a cofactor.

The catalysed reaction is 7-carboxy-7-deazaguanine + NH4(+) + ATP = 7-cyano-7-deazaguanine + ADP + phosphate + H2O + H(+). It participates in purine metabolism; 7-cyano-7-deazaguanine biosynthesis. In terms of biological role, catalyzes the ATP-dependent conversion of 7-carboxy-7-deazaguanine (CDG) to 7-cyano-7-deazaguanine (preQ(0)). This is 7-cyano-7-deazaguanine synthase from Neisseria gonorrhoeae (strain ATCC 700825 / FA 1090).